The sequence spans 443 residues: Diels-Alderase poxQ (443 aa).

A signal peptide spans 1-23 (MARIPLEFLSITLPVLLLAYCLA). Residues Asn78, Asn97, and Asn145 are each glycosylated (N-linked (GlcNAc...) asparagine).

Belongs to the Diels-Alderase family.

The protein operates within secondary metabolite biosynthesis. Diels-Alderase; part of the gene cluster that mediates the biosynthesis of oxaleimides, cytotoxic compounds containing an unusual disubstituted succinimide moiety. The first step of the pathway is provided by the HR-PKS poxF that serves in a new mode of collaborative biosynthesis with the PKS-NRPS poxE, by providing the olefin containing amino acid substrate via the synthesis of an ACP-bound dec-4-enoate. The cytochrome P450 monooxygenase poxM-catalyzed oxidation at the alpha-position creates the enzyme-bound 2-hydroxydec-4-enoyl-ACP thioester, which may be prone to spontaneous hydrolysis to yield 2-hydroxydec-4-enoic acid due to increased electrophilicity of the carbonyl. 2-hydroxydec-4-enoic acid can then be further oxidized by poxM to yield the alpha-ketoacid 2-oxodec-4-enoicacid, which is reductively aminated by the aminotransferase poxL to yield (S,E)-2-aminodec-4-enoic acid. The Hybrid PKS-NRPS synthetase poxE then performs condensation between the octaketide product of its PKS modules and the amino group of (S,E)-2-aminodec-4-enoic acid which is activated and incorporated by the adenylation domain. The resulting aminoacyl product can be cyclized by the Diels-Alderase PoxQ and reductively released by the reductive (R) domain of poxE to yield an aldehyde intermediate. The released aldehyde is then substrate for a Knoevenagel condensation by the hydrolyase poxO followed by an oxidation at the 5-position of the pyrrolidone ring. The presence of the olefin from the amino acid building block allows for migration of the substituted allyl group to occur. This allylic transposition reaction takes place in a conjugate addition, semipinacol-like fashion to yield a succinimide intermediate. Iterative two-electron oxidations of the C7 methyl of the succinimide intermediate to the carboxylic acid can be catalyzed by one of two remaining cytochrome P450 monooxygenasess poxC or poxD to yield oxaleimide A. Subsequent oxidation yields the maleimide scaffold oxaleimide I. Both oxaleimide A and oxaleimide I can undergo oxidative modifications in the decalin ring to yield the series of products oxaleimides B to H. The chain is Diels-Alderase poxQ from Penicillium oxalicum (strain 114-2 / CGMCC 5302) (Penicillium decumbens).